The following is a 243-amino-acid chain: tRNA (guanine-N(1)-)-methyltransferase (243 aa).

S-adenosyl-L-methionine contacts are provided by residues Gly108 and Leu127–Leu132.

Belongs to the RNA methyltransferase TrmD family. In terms of assembly, homodimer.

It is found in the cytoplasm. The enzyme catalyses guanosine(37) in tRNA + S-adenosyl-L-methionine = N(1)-methylguanosine(37) in tRNA + S-adenosyl-L-homocysteine + H(+). Functionally, specifically methylates guanosine-37 in various tRNAs. The chain is tRNA (guanine-N(1)-)-methyltransferase from Streptococcus equi subsp. zooepidemicus (strain H70).